Here is a 388-residue protein sequence, read N- to C-terminus: Succinate--CoA ligase [ADP-forming] subunit beta (388 aa).

Positions 9–244 (KEILRKFGVA…PDEEDPKETQ (236 aa)) constitute an ATP-grasp domain. Residues Lys46, 53–55 (GRG), Glu99, Cys102, and Glu107 contribute to the ATP site. Residues Asn199 and Asp213 each coordinate Mg(2+). Substrate-binding positions include Asn264 and 321–323 (GIM).

The protein belongs to the succinate/malate CoA ligase beta subunit family. In terms of assembly, heterotetramer of two alpha and two beta subunits. Requires Mg(2+) as cofactor.

It catalyses the reaction succinate + ATP + CoA = succinyl-CoA + ADP + phosphate. It carries out the reaction GTP + succinate + CoA = succinyl-CoA + GDP + phosphate. It participates in carbohydrate metabolism; tricarboxylic acid cycle; succinate from succinyl-CoA (ligase route): step 1/1. Functionally, succinyl-CoA synthetase functions in the citric acid cycle (TCA), coupling the hydrolysis of succinyl-CoA to the synthesis of either ATP or GTP and thus represents the only step of substrate-level phosphorylation in the TCA. The beta subunit provides nucleotide specificity of the enzyme and binds the substrate succinate, while the binding sites for coenzyme A and phosphate are found in the alpha subunit. In Anaeromyxobacter dehalogenans (strain 2CP-1 / ATCC BAA-258), this protein is Succinate--CoA ligase [ADP-forming] subunit beta.